A 512-amino-acid chain; its full sequence is ETS translocation variant 3 (512 aa).

The segment at residues 35–116 (IQLWHFILEL…KGKRFTYKFN (82 aa)) is a DNA-binding region (ETS). Positions 136–222 (VPQSAPPVPT…NAIGGGGIGH (87 aa)) are disordered. Residues serine 139, serine 159, and serine 315 each carry the phosphoserine modification. A compositionally biased stretch (polar residues) spans 158–184 (HSPTNDVQPGRFSASSLTASGQESSNG). The segment at 336-512 (PEESTQFSIK…QGLATAAADA (177 aa)) is disordered. 3 stretches are compositionally biased toward basic and acidic residues: residues 380 to 406 (IKVE…HTQE), 453 to 468 (DRPG…KEDA), and 479 to 491 (RWND…ELSK). Lysine 381 is covalently cross-linked (Glycyl lysine isopeptide (Lys-Gly) (interchain with G-Cter in SUMO2)). Lysine 388 carries the N6-acetyllysine; alternate modification. Lysine 388 participates in a covalent cross-link: Glycyl lysine isopeptide (Lys-Gly) (interchain with G-Cter in SUMO2); alternate.

This sequence belongs to the ETS family.

The protein localises to the nucleus. Functionally, transcriptional repressor that contribute to growth arrest during terminal macrophage differentiation by repressing target genes involved in Ras-dependent proliferation. Represses MMP1 promoter activity. This Homo sapiens (Human) protein is ETS translocation variant 3 (ETV3).